Here is a 197-residue protein sequence, read N- to C-terminus: Holliday junction resolvase RecU (197 aa).

A disordered region spans residues 1–21; it reads MVNYPSGVRAGGYPQKKKNQN. Mg(2+) contacts are provided by threonine 82, aspartate 84, aspartate 97, and glutamine 116.

The protein belongs to the RecU family. The cofactor is Mg(2+).

It localises to the cytoplasm. It catalyses the reaction Endonucleolytic cleavage at a junction such as a reciprocal single-stranded crossover between two homologous DNA duplexes (Holliday junction).. Its function is as follows. Endonuclease that resolves Holliday junction intermediates in genetic recombination. Cleaves mobile four-strand junctions by introducing symmetrical nicks in paired strands. Promotes annealing of linear ssDNA with homologous dsDNA. Required for DNA repair, homologous recombination and chromosome segregation. This chain is Holliday junction resolvase RecU, found in Oenococcus oeni (strain ATCC BAA-331 / PSU-1).